The primary structure comprises 298 residues: ATP synthase gamma chain (298 aa).

The protein belongs to the ATPase gamma chain family. In terms of assembly, F-type ATPases have 2 components, CF(1) - the catalytic core - and CF(0) - the membrane proton channel. CF(1) has five subunits: alpha(3), beta(3), gamma(1), delta(1), epsilon(1). CF(0) has three main subunits: a, b and c.

It localises to the cell inner membrane. In terms of biological role, produces ATP from ADP in the presence of a proton gradient across the membrane. The gamma chain is believed to be important in regulating ATPase activity and the flow of protons through the CF(0) complex. In Desulfosudis oleivorans (strain DSM 6200 / JCM 39069 / Hxd3) (Desulfococcus oleovorans), this protein is ATP synthase gamma chain.